The following is a 291-amino-acid chain: Verruculogen synthase (291 aa).

Residue Tyr-68 is part of the active site.

This sequence belongs to the PhyH family. Homodimer. Fe cation is required as a cofactor.

The catalysed reaction is fumitremorgin B + 2-oxoglutarate + AH2 + 2 O2 = verruculogen + succinate + A + CO2 + H2O. Its pathway is mycotoxin biosynthesis. Its function is as follows. Verruculogen synthase; part of the gene cluster that mediates the biosynthesis of fumitremorgins, indole alkaloids that carry not only intriguing chemical structures, but also interesting biological and pharmacological activities. The biosynthesis of fumitremorgin-type alkaloids begins by condensation of the two amino acids L-tryptophan and L-proline to brevianamide F, catalyzed by the non-ribosomal peptide synthetase ftmA. Brevianamide F is then prenylated by the prenyltransferase ftmPT1/ftmB in the presence of dimethylallyl diphosphate, resulting in the formation of tryprostatin B. The three cytochrome P450 monooxygenases, ftmP450-1/ftmC, ftmP450-2/ftmE and ftmP450-3/FtmG, are responsible for the conversion of tryprostatin B to 6-hydroxytryprostatin B, tryprostatin A to fumitremorgin C and fumitremorgin C to 12,13-dihydroxyfumitremorgin C, respectively. The putative methyltransferase ftmMT/ftmD is expected for the conversion of 6-hydroxytryprostatin B to tryprostatin A. FtmPT2/FtmH catalyzes the prenylation of 12,13-dihydroxyfumitre-morgin C in the presence of dimethylallyl diphosphate, resulting in the formation of fumitremorgin B. Fumitremorgin B is further converted to verruculogen by ftmOx1/ftmF via the insertion of an endoperoxide bond between the two prenyl moieties. In some fungal species, verruculogen is further converted to fumitremorgin A, but the enzymes involved in this step have not been identified yet. The sequence is that of Verruculogen synthase from Aspergillus fumigatus (strain ATCC MYA-4609 / CBS 101355 / FGSC A1100 / Af293) (Neosartorya fumigata).